A 163-amino-acid chain; its full sequence is Phosphopantetheine adenylyltransferase (163 aa).

A substrate-binding site is contributed by Thr9. ATP-binding positions include 9–10 and His17; that span reads TF. 3 residues coordinate substrate: Lys41, Leu76, and Arg90. Residues 91–93, Glu101, and 126–132 each bind ATP; these read GLR and YSFISST.

The protein belongs to the bacterial CoaD family. Homohexamer. Mg(2+) serves as cofactor.

The protein resides in the cytoplasm. The catalysed reaction is (R)-4'-phosphopantetheine + ATP + H(+) = 3'-dephospho-CoA + diphosphate. It participates in cofactor biosynthesis; coenzyme A biosynthesis; CoA from (R)-pantothenate: step 4/5. Functionally, reversibly transfers an adenylyl group from ATP to 4'-phosphopantetheine, yielding dephospho-CoA (dPCoA) and pyrophosphate. In Dichelobacter nodosus (strain VCS1703A), this protein is Phosphopantetheine adenylyltransferase.